The primary structure comprises 127 residues: Large ribosomal subunit protein bL12 (127 aa).

Belongs to the bacterial ribosomal protein bL12 family. As to quaternary structure, homodimer. Part of the ribosomal stalk of the 50S ribosomal subunit. Forms a multimeric L10(L12)X complex, where L10 forms an elongated spine to which 2 to 4 L12 dimers bind in a sequential fashion. Binds GTP-bound translation factors.

Forms part of the ribosomal stalk which helps the ribosome interact with GTP-bound translation factors. Is thus essential for accurate translation. This chain is Large ribosomal subunit protein bL12, found in Syntrophotalea carbinolica (strain DSM 2380 / NBRC 103641 / GraBd1) (Pelobacter carbinolicus).